The sequence spans 190 residues: MYVAMIIRKYFLIIALLVMPWLAIPSVSAADKGWFNTFTDNVAETWRQPEYYDLYVPAITWHARFAYDKEKTDRYNERPWGVGFGQSRWDDKGNWHGLYMMAFKDSFNKWEPIGGYGWEKTWRPLEDDNFRLGLGFTAGVTARDNWNYIPIPVLLPLASIGYGPATFQMTYIPGSYNNGNVYFAWMRFQF.

The signal sequence occupies residues 1–29; that stretch reads MYVAMIIRKYFLIIALLVMPWLAIPSVSA. Active-site residues include His-62, Asp-105, and Ser-106.

Belongs to the lipid A palmitoyltransferase family. Homodimer.

Its subcellular location is the cell outer membrane. It catalyses the reaction a lipid A + a 1,2-diacyl-sn-glycero-3-phosphocholine = a hepta-acyl lipid A + a 2-acyl-sn-glycero-3-phosphocholine. The catalysed reaction is a lipid IVA + a 1,2-diacyl-sn-glycero-3-phosphocholine = a lipid IVB + a 2-acyl-sn-glycero-3-phosphocholine. The enzyme catalyses a lipid IIA + a 1,2-diacyl-sn-glycero-3-phosphocholine = a lipid IIB + a 2-acyl-sn-glycero-3-phosphocholine. In terms of biological role, transfers a fatty acid residue from the sn-1 position of a phospholipid to the N-linked hydroxyfatty acid chain on the proximal unit of lipid A or its precursors. This chain is Lipid A acyltransferase PagP, found in Salmonella typhi.